A 57-amino-acid polypeptide reads, in one-letter code: Large ribosomal subunit protein bL32 (57 aa).

The segment covering 1–19 has biased composition (basic residues); sequence MATPKFKKSRANTHSRRSQ. A disordered region spans residues 1–20; that stretch reads MATPKFKKSRANTHSRRSQW.

The protein belongs to the bacterial ribosomal protein bL32 family.

This chain is Large ribosomal subunit protein bL32, found in Corynebacterium aurimucosum (strain ATCC 700975 / DSM 44827 / CIP 107346 / CN-1) (Corynebacterium nigricans).